The chain runs to 282 residues: ATP synthase gamma chain (282 aa).

The protein belongs to the ATPase gamma chain family. As to quaternary structure, F-type ATPases have 2 components, CF(1) - the catalytic core - and CF(0) - the membrane proton channel. CF(1) has five subunits: alpha(3), beta(3), gamma(1), delta(1), epsilon(1). CF(0) has three main subunits: a, b and c. In this bacterium the a and b subunits are transcribed but do not seem to be translated, thus the ATP synthase consists of the alpha, beta, gamma, delta, epsilon and c subunits.

The protein localises to the cell membrane. Its function is as follows. Produces ATP from ADP in the presence of a proton gradient across the membrane. The gamma chain is believed to be important in regulating ATPase activity and the flow of protons through the CF(0) complex. The chain is ATP synthase gamma chain from Moorella thermoacetica (strain ATCC 39073 / JCM 9320).